Consider the following 150-residue polypeptide: uncharacterized protein (150 aa).

This is an uncharacterized protein from Azospirillum brasilense.